The primary structure comprises 240 residues: Homeobox protein notochord (240 aa).

Polar residues predominate over residues 1 to 13; the sequence is MSSPAPSGTQVQP. Disordered stretches follow at residues 1 to 21 and 208 to 240; these read MSSP…PCPG and QKLK…GIGS. Residues 149–208 constitute a DNA-binding region (homeobox); that stretch reads TKRVRTTFNLQQLQELEKVFAKQHNLVGKERAQLAARLHLTENQVRIWFQNRRVKYQKQQ. Residues 213-225 show a composition bias toward low complexity; it reads PSSSVMEEPSSSS.

It is found in the nucleus. In terms of biological role, transcription factor that controls node morphogenesis. Acts downstream of both FOXA2 and Brachyury (T) during notochord development. Is essential for cilia formation in the posterior notochord (PNC) and for left-right patterning; acts upstream of FOXJ1 and RFX3 in this process and is required for the expression of various components important for axonemal assembly and function. Plays a role in regulating axial versus paraxial cell fate. Activates the transcription of ciliary proteins C11orf97 homolog, FAM183B and SPACA9 in the embryonic ventral node. The sequence is that of Homeobox protein notochord (Noto) from Mus musculus (Mouse).